The primary structure comprises 683 residues: MGGLQNVRSAALIGHNGSGKSLLLAQILYKSGLIDKADTKYVDYDPVEEEKGASFSSHVASLEWKGKKVYLIDTPGFSDFISEVINGIFVSENIISVVNAVAGVEIQTERTWNMADEMKKPIIVFVNQMDKERANFENVVAELKERFSRKIVPVVVPIGAAENFEGVVDLLKKKAYRYDGDKVQEEDMPESFNDMRSEILEDIVEQDEELMMRYLDGEDIGYDELMRVLKEGYKKGEIVPVLSGSALKGIGLDLLLDYLGDIGVSPEEAPSYKALLEDGTEIEVKFSEEEPFCAYIFKSVVDQFVGRITFAKVIAGVLRPGDTVVNVQKDVTEKVGHVYVPILKQQKEVESAGPGEIVVLLKLKEGAVGETLAHRDRRVKIVPPAFPEPMFSRSVHPKSKSDIDKISSGLSRLSDSDPTFVWEYDPETGETVVSGLGAMHLDVMIERLKKIFGVDVEVGKPKIAYRETITTTAVAEHKHKKQTGGHGQYGHVKIQLEPLPRGQGYEFVDKIVGGVIPRNFIPSVDKGIREAMKKGVLAGYPVTDVRVILFDGSYHEVDSSDISFQIAAIQAFKKGMEAAKPVILEPIMEVEVFVPEENAGDVMGEISSRRGRPLGMEPSGKGMVKVKAEVPLAEMLDFSSKLSSITSGRGYFTMRFQRYEIVPPNIQEKIIEERRREMQEQEK.

The tr-type G domain occupies 5–267 (QNVRSAALIG…YLGDIGVSPE (263 aa)). GTP-binding positions include 14 to 21 (GHNGSGKS), 73 to 77 (DTPGF), and 127 to 130 (NQMD).

Belongs to the TRAFAC class translation factor GTPase superfamily. Classic translation factor GTPase family. EF-G/EF-2 subfamily.

This is Elongation factor G-like protein from Thermotoga maritima (strain ATCC 43589 / DSM 3109 / JCM 10099 / NBRC 100826 / MSB8).